The chain runs to 413 residues: Putative F-box protein At3g58820 (413 aa).

Residues 1–48 (MDGVSSLPNELLCHILSFLTTKEAALTSILSKRWRNLIAFVPNLYIDD) enclose the F-box domain.

The polypeptide is Putative F-box protein At3g58820 (Arabidopsis thaliana (Mouse-ear cress)).